The following is a 356-amino-acid chain: MFS-type transporter tazK (356 aa).

9 helical membrane-spanning segments follow: residues Leu-12–His-32, Phe-42–Phe-62, Gly-69–Thr-89, Met-102–Leu-122, Ile-178–Val-198, Gly-211–Phe-231, Leu-257–Thr-277, Ile-288–Tyr-308, and Ala-320–Pro-340.

This sequence belongs to the major facilitator superfamily. CAR1 family.

It localises to the membrane. Its function is as follows. MFS-type transporter; part of the gene cluster that mediates the biosynthesis of azaterrilone A and other azaphilones, a class of fungal metabolites characterized by a highly oxygenated pyrano-quinone bicyclic core and exhibiting a broad range of bioactivities. This is MFS-type transporter tazK from Aspergillus terreus (strain NIH 2624 / FGSC A1156).